A 267-amino-acid polypeptide reads, in one-letter code: Glucosamine-6-phosphate deaminase (267 aa).

Aspartate 71 serves as the catalytic Proton acceptor; for enolization step. Aspartate 140 (for ring-opening step) is an active-site residue. The Proton acceptor; for ring-opening step role is filled by histidine 142. Glutamate 147 (for ring-opening step) is an active-site residue.

Belongs to the glucosamine/galactosamine-6-phosphate isomerase family. As to quaternary structure, homohexamer.

The protein localises to the cytoplasm. It carries out the reaction alpha-D-glucosamine 6-phosphate + H2O = beta-D-fructose 6-phosphate + NH4(+). It participates in nucleotide-sugar biosynthesis; UDP-N-acetyl-alpha-D-glucosamine biosynthesis; alpha-D-glucosamine 6-phosphate from D-fructose 6-phosphate: step 1/1. Catalyzes the reversible conversion of alpha-D-glucosamine 6-phosphate (GlcN-6P) into beta-D-fructose 6-phosphate (Fru-6P) and ammonium ion, a regulatory reaction step in de novo uridine diphosphate-N-acetyl-alpha-D-glucosamine (UDP-GlcNAc) biosynthesis via hexosamine pathway. This is Glucosamine-6-phosphate deaminase from Caenorhabditis elegans.